Consider the following 96-residue polypeptide: MEQPPEDQGPQREPYNEWTLELLEELKHEAVRHFPREWLHGLGQHIYNTYGDTWEGVEAIIRILQQLLFIHFRIGCHHSRIGIIRQRRIRNGSGRS.

A homooligomerization region spans residues 1-42 (MEQPPEDQGPQREPYNEWTLELLEELKHEAVRHFPREWLHGL). 2 positions are modified to phosphoserine; by host: Ser79 and Ser96.

Belongs to the HIV-1 VPR protein family. Homooligomer, may form homodimer. Interacts with p6-gag region of the Pr55 Gag precursor protein through a (Leu-X-X)4 motif near the C-terminus of the P6gag protein. Interacts with host UNG. May interact with host RAD23A/HHR23A. Interacts with host VPRBP/DCAF1, leading to hijack the CUL4A-RBX1-DDB1-DCAF1/VPRBP complex, mediating ubiquitination of host proteins such as TERT and ZGPAT and arrest of the cell cycle in G2 phase. In terms of processing, phosphorylated on several residues by host. These phosphorylations regulate VPR activity for the nuclear import of the HIV-1 pre-integration complex.

It localises to the virion. It is found in the host nucleus. Its subcellular location is the host extracellular space. During virus replication, may deplete host UNG protein, and incude G2-M cell cycle arrest. Acts by targeting specific host proteins for degradation by the 26S proteasome, through association with the cellular CUL4A-DDB1 E3 ligase complex by direct interaction with host VPRPB/DCAF-1. Cell cycle arrest reportedly occurs within hours of infection and is not blocked by antiviral agents, suggesting that it is initiated by the VPR carried into the virion. Additionally, VPR induces apoptosis in a cell cycle dependent manner suggesting that these two effects are mechanistically linked. Detected in the serum and cerebrospinal fluid of AIDS patient, VPR may also induce cell death to bystander cells. Functionally, during virus entry, plays a role in the transport of the viral pre-integration (PIC) complex to the host nucleus. This function is crucial for viral infection of non-dividing macrophages. May act directly at the nuclear pore complex, by binding nucleoporins phenylalanine-glycine (FG)-repeat regions. This chain is Protein Vpr, found in Homo sapiens (Human).